The sequence spans 98 residues: MADQKGPKYTPAAEKPRGRRKTAIGYVVSDKMQKTIVVELEDRKSHPLYGKIIRTTKKVKAHDENGEAGIGDRVSLMETRPLSATKRWRLVEILEKAK.

The tract at residues 1-21 (MADQKGPKYTPAAEKPRGRRK) is disordered. K96 is covalently cross-linked (Isoglutamyl lysine isopeptide (Lys-Gln) (interchain with Q-Cter in protein Pup)).

The protein belongs to the universal ribosomal protein uS17 family. Part of the 30S ribosomal subunit.

One of the primary rRNA binding proteins, it binds specifically to the 5'-end of 16S ribosomal RNA. This is Small ribosomal subunit protein uS17 (rpsQ) from Mycolicibacterium smegmatis (strain ATCC 700084 / mc(2)155) (Mycobacterium smegmatis).